Consider the following 345-residue polypeptide: Fructose-1,6-bisphosphatase class 1 (345 aa).

Residues glutamate 90, aspartate 109, leucine 111, and aspartate 112 each contribute to the Mg(2+) site. Substrate-binding positions include 112 to 115 and asparagine 199; that span reads DGSS. Glutamate 271 provides a ligand contact to Mg(2+).

Belongs to the FBPase class 1 family. In terms of assembly, homotetramer. It depends on Mg(2+) as a cofactor.

It localises to the cytoplasm. The enzyme catalyses beta-D-fructose 1,6-bisphosphate + H2O = beta-D-fructose 6-phosphate + phosphate. Its pathway is carbohydrate biosynthesis; Calvin cycle. The chain is Fructose-1,6-bisphosphatase class 1 from Rhodopseudomonas palustris (strain BisB5).